Reading from the N-terminus, the 412-residue chain is Peptidase T (412 aa).

His-81 contacts Zn(2+). The active site involves Asp-83. Asp-144 serves as a coordination point for Zn(2+). Glu-178 (proton acceptor) is an active-site residue. Positions 179, 201, and 383 each coordinate Zn(2+).

It belongs to the peptidase M20B family. Zn(2+) serves as cofactor.

It is found in the cytoplasm. The catalysed reaction is Release of the N-terminal residue from a tripeptide.. Cleaves the N-terminal amino acid of tripeptides. The protein is Peptidase T of Bacillus cereus (strain ZK / E33L).